A 406-amino-acid polypeptide reads, in one-letter code: Tryptophan 2,3-dioxygenase (406 aa).

S19 carries the post-translational modification Phosphoserine. Residues 72-76 (FIITH) and R144 each bind substrate. H328 is a binding site for heme. T342 lines the substrate pocket.

Belongs to the tryptophan 2,3-dioxygenase family. As to quaternary structure, homotetramer. Dimer of dimers. The cofactor is heme.

The catalysed reaction is L-tryptophan + O2 = N-formyl-L-kynurenine. It participates in amino-acid degradation; L-tryptophan degradation via kynurenine pathway; L-kynurenine from L-tryptophan: step 1/2. In terms of biological role, heme-dependent dioxygenase that catalyzes the oxidative cleavage of the L-tryptophan (L-Trp) pyrrole ring and converts L-tryptophan to N-formyl-L-kynurenine. Catalyzes the oxidative cleavage of the indole moiety. This chain is Tryptophan 2,3-dioxygenase, found in Bos taurus (Bovine).